The following is a 400-amino-acid chain: Chalcone synthase 7 (400 aa).

Residue Cys-168 is part of the active site.

This sequence belongs to the thiolase-like superfamily. Chalcone/stilbene synthases family.

The catalysed reaction is (E)-4-coumaroyl-CoA + 3 malonyl-CoA + 3 H(+) = 2',4,4',6'-tetrahydroxychalcone + 3 CO2 + 4 CoA. Its pathway is secondary metabolite biosynthesis; flavonoid biosynthesis. Its function is as follows. The primary product of this enzyme is 4,2',4',6'-tetrahydroxychalcone (also termed naringenin-chalcone or chalcone) which can under specific conditions spontaneously isomerize into naringenin. The chain is Chalcone synthase 7 (CHS7) from Sorghum bicolor (Sorghum).